Reading from the N-terminus, the 144-residue chain is Large ribosomal subunit protein uL15 (144 aa).

The segment at 1–54 is disordered; sequence MRLNTLSPAEGSKKAGKRLGRGIGSGLGKTGGRGHKGQNSRSGGGVRRGFEGGQ. A compositionally biased stretch (gly residues) spans 21-31; the sequence is RGIGSGLGKTG.

Belongs to the universal ribosomal protein uL15 family. As to quaternary structure, part of the 50S ribosomal subunit.

Binds to the 23S rRNA. The sequence is that of Large ribosomal subunit protein uL15 from Enterobacter sp. (strain 638).